The sequence spans 161 residues: DNA-directed RNA polymerase III subunit RPC9 (161 aa).

The disordered stretch occupies residues 75–96; the sequence is QEDEGEERESSGAKDAEKSGIS. The span at 82–96 shows a compositional bias: basic and acidic residues; the sequence is RESSGAKDAEKSGIS.

The protein belongs to the eukaryotic RPC9 RNA polymerase subunit family. As to quaternary structure, component of the RNA polymerase III (Pol III) complex consisting of 17 subunits. Forms a Pol III subcomplex with RPC25/RPC8. Interacts with BURF1/TDS4.

It localises to the nucleus. In terms of biological role, DNA-dependent RNA polymerase catalyzes the transcription of DNA into RNA using the four ribonucleoside triphosphates as substrates. Specific peripheric component of RNA polymerase III which synthesizes small RNAs, such as 5S rRNA and tRNAs. The RPC25/RPC8-RPC17/RPC9 subcomplex may bind Pol III transcripts emerging from the adjacent exit pore during elongation. The polypeptide is DNA-directed RNA polymerase III subunit RPC9 (RPC17) (Saccharomyces cerevisiae (strain ATCC 204508 / S288c) (Baker's yeast)).